Consider the following 330-residue polypeptide: Zinc finger protein sdz-12 (330 aa).

5 consecutive C2H2-type zinc fingers follow at residues 27–48, 63–85, 91–113, 120–144, and 153–176; these read PQCQ…HMKH, FRCE…QITH, KKCS…LHNH, FDCP…LVNH, and APCG…HFDH. Residues 183 to 195 are compositionally biased toward low complexity; it reads SAPAPTSSARLSP. The interval 183-203 is disordered; sequence SAPAPTSSARLSPITVSTSGS. Residues 271–293 form a C2H2-type 6 zinc finger; the sequence is FECKHCTIKFHDATMSIMHNALH.

The protein belongs to the krueppel C2H2-type zinc-finger protein family. Expressed in the somatic gonad.

Together with ehn-3, may play a role in gonadogenesis. In Caenorhabditis elegans, this protein is Zinc finger protein sdz-12.